Here is a 371-residue protein sequence, read N- to C-terminus: Trans-enoyl reductase calK (371 aa).

An NADP(+)-binding site is contributed by 51–54 (NDHK). A substrate-binding site is contributed by 145–152 (WSTISLAF). Residues 181 to 184 (GTAS), 204 to 207 (SNQS), Y222, and 269 to 270 (LE) contribute to the NADP(+) site. 289 to 293 (GFQVL) contacts substrate. 359–360 (VR) is an NADP(+) binding site.

It belongs to the zinc-containing alcohol dehydrogenase family. Monomer.

The protein operates within secondary metabolite biosynthesis. Functionally, trans-enoyl reductase; part of the gene cluster that mediates the biosynthesis of calbistrin A and related compounds. Calbistrin A is a secondary metabolite with an interesting structure that was recently found to have bioactivity against leukemia cells. It consists of two polyketides linked by an ester bond: a bicyclic decalin containing polyketide and a linear 12 carbon dioic acid structure. The polyketide synthase calA is probably responsible for forming the decalin moiety. Because calA lacks a designated enoylreductase (ER) domain, the required activity is provided by the trans-enoyl reductase calK. Following release from the PKS, calF then probably catalyzes the oxidation and the subsequent Diels Alder cycloisomerization that lead to the formation of the decalin moiety. The decalin polyketide backbone includes two C-methyl groups, at C7 and C11 in backbone, of which the C7 position is probably methylated by the methyltransferase domain of calA. A candidate for adding the methyl group at C11, if not done by CalA, is the cluster methyltransferase calH. Several additional tailoring enzymes within the cluster could be involved in the modification of the decalin polyketide product. Those include the 3 cytochrome P450 monooxygenases CalE, CalG and CalL, of which one might be responsible for the introduction of the extra hydroxyl group attached to the backbone of the decalin moiety, at position C9 in the backbone, that allows for attachment of the linear moiety. One tailoring enzyme activity that is expected to be involved in biosynthesis of calbistrin is an acyltransferase for connecting the two polyketide synthase products, and which could be performed by the cluster acyltransferase calJ. The enzyme responsible for the biosynthesis of the linear moiety, probably a second PKS, has not been identified yet. This chain is Trans-enoyl reductase calK, found in Penicillium decumbens.